A 236-amino-acid polypeptide reads, in one-letter code: Adenylate dimethylallyltransferase (236 aa).

The protein belongs to the isopentenyl transferase family.

It catalyses the reaction dimethylallyl diphosphate + AMP = N(6)-(dimethylallyl)adenosine 5'-phosphate + diphosphate. Its function is as follows. Transfers dimethylallyl groups to AMP as part of the biosynthesis of cytokinin phytohormones. The chain is Adenylate dimethylallyltransferase (ipt) from Allorhizobium ampelinum (strain ATCC BAA-846 / DSM 112012 / S4) (Agrobacterium vitis (strain S4)).